Here is an 872-residue protein sequence, read N- to C-terminus: Cadherin-1 (872 aa).

The N-terminal stretch at Met1–Ala25 is a signal peptide. Residues Glu26–Arg148 constitute a propeptide that is removed on maturation. 5 consecutive Cadherin domains span residues Arg148 to Phe256, Thr257 to Phe370, Asp371 to Phe481, Leu482 to Leu589, and Val605 to Glu688. Residues Asp149–Ala701 are Extracellular-facing. Asn209 carries N-linked (GlcNAc...) asparagine glycosylation. The Ca(2+) site is built by Asp251 and Asp282. 4 N-linked (GlcNAc...) asparagine glycosylation sites follow: Asn456, Asn552, Asn631, and Asn669. Residues Ile702–Phe722 traverse the membrane as a helical segment. The Cytoplasmic portion of the chain corresponds to Val723–Asp872. A disordered region spans residues Glu739–Asp758. Acidic residues predominate over residues Tyr747–Asp758.

Homodimer. Abundantly expressed in intestine, stomach, liver, kidney, skin and eye. Also expressed in heart, lung, testis, ovary, muscle and brain.

It is found in the cell junction. It localises to the adherens junction. The protein resides in the cell membrane. Its subcellular location is the endosome. The protein localises to the golgi apparatus. It is found in the trans-Golgi network. It localises to the cytoplasm. The protein resides in the desmosome. In terms of biological role, cadherins are calcium-dependent cell adhesion proteins. They preferentially interact with themselves in a homophilic manner in connecting cells; cadherins may thus contribute to the sorting of heterogeneous cell types. Promotes organization of radial actin fiber structure and cellular response to contractile forces, via anchoring of radial actin fibers to CDH1 junction complexes at the cell membrane. E-cadherin is a ligand for integrin alpha-E/beta-7. This chain is Cadherin-1 (cdh1), found in Xenopus laevis (African clawed frog).